The chain runs to 153 residues: Superoxide dismutase [Cu-Zn] (153 aa).

3 residues coordinate Cu cation: His-45, His-47, and His-62. A disulfide bridge links Cys-56 with Cys-145. Residues His-62, His-70, His-79, and Asp-82 each coordinate Zn(2+). His-119 serves as a coordination point for Cu cation.

Belongs to the Cu-Zn superoxide dismutase family. As to quaternary structure, homodimer. It depends on Cu cation as a cofactor. The cofactor is Zn(2+).

It is found in the cytoplasm. The enzyme catalyses 2 superoxide + 2 H(+) = H2O2 + O2. Destroys radicals which are normally produced within the cells and which are toxic to biological systems. This chain is Superoxide dismutase [Cu-Zn], found in Drosophila orena (Fruit fly).